Consider the following 256-residue polypeptide: 1-(5-phosphoribosyl)-5-[(5-phosphoribosylamino)methylideneamino] imidazole-4-carboxamide isomerase (256 aa).

Asp8 functions as the Proton acceptor in the catalytic mechanism. The active-site Proton donor is the Asp129.

The protein belongs to the HisA/HisF family.

Its subcellular location is the cytoplasm. The enzyme catalyses 1-(5-phospho-beta-D-ribosyl)-5-[(5-phospho-beta-D-ribosylamino)methylideneamino]imidazole-4-carboxamide = 5-[(5-phospho-1-deoxy-D-ribulos-1-ylimino)methylamino]-1-(5-phospho-beta-D-ribosyl)imidazole-4-carboxamide. It functions in the pathway amino-acid biosynthesis; L-histidine biosynthesis; L-histidine from 5-phospho-alpha-D-ribose 1-diphosphate: step 4/9. This is 1-(5-phosphoribosyl)-5-[(5-phosphoribosylamino)methylideneamino] imidazole-4-carboxamide isomerase from Prochlorococcus marinus (strain NATL1A).